The chain runs to 628 residues: Beta-galactosidase large subunit (628 aa).

The active-site Proton donor is Glu468. Glu536 serves as the catalytic Nucleophile.

It belongs to the glycosyl hydrolase 2 family. As to quaternary structure, heterodimer of a large (LacL) and a small subunit (LacM).

It carries out the reaction Hydrolysis of terminal non-reducing beta-D-galactose residues in beta-D-galactosides.. Component of a beta-galactosidase. This is Beta-galactosidase large subunit (lacL) from Lactobacillus acidophilus (strain ATCC 700396 / NCK56 / N2 / NCFM).